The primary structure comprises 535 residues: Triacylglyceride transporter MHAS_02168/C731_2106 (535 aa).

At 1–18 the chain is on the cytoplasmic side; that stretch reads MAFPQTPNRLIRPRRTSR. The helical transmembrane segment at 19 to 39 threads the bilayer; it reads GIAISAGGLAVLLGALDTYVV. At 40-60 the chain is on the periplasmic side; sequence VSIVTDIMRDVGIAVNQIQRV. The helical transmembrane segment at 61–82 threads the bilayer; that stretch reads TPIITGYLLGYIAAMPLLGRAS. Over 83-86 the chain is Cytoplasmic; the sequence is DRFG. The helical transmembrane segment at 87-107 threads the bilayer; the sequence is RKLLIQISLAGFALGSVITAL. The Periplasmic segment spans residues 108 to 111; the sequence is ATNL. Residues 112–136 form a helical membrane-spanning segment; it reads DVLVAGRVIQGAASGALLPVTLALA. Residues 137–145 are Cytoplasmic-facing; the sequence is ADLWATHKR. A helical membrane pass occupies residues 146–167; that stretch reads AAVLGGVGAAQELGAVLGPIYG. Residues 168–177 lie on the Periplasmic side of the membrane; sequence IFVVWLFHHW. Residues 178–198 form a helical membrane-spanning segment; that stretch reads QAVFWVNVPLALIAMVLIHIS. Topologically, residues 199–212 are cytoplasmic; the sequence is LPPRVRTEEPQRVD. The helical transmembrane segment at 213–230 threads the bilayer; sequence VTGGLLLALALGLATIGL. Over 231 to 243 the chain is Periplasmic; the sequence is YNAEPDGKQVLPE. The helical transmembrane segment at 244-263 threads the bilayer; the sequence is YGPPLIIGAVIAAVAFLVWE. At 264–278 the chain is on the cytoplasmic side; the sequence is RFARTRLLDPAGVRF. Residues 279 to 300 form a helical membrane-spanning segment; that stretch reads RPFLIALLVSLVTGGALMVTLV. Topologically, residues 301 to 320 are periplasmic; that stretch reads NVELFGQGVLGLDQDEAVFL. 2 helical membrane passes run 321–343 and 344–364; these read LARFLIALPVGALLGGWIATRVG and DRAVTAVGLLIAAGGFYLIAQ. The Periplasmic segment spans residues 365–384; the sequence is WPADVLESRHDLGFVSLPTL. The beta-hairpin stretch occupies residues 373–382; the sequence is RHDLGFVSLP. Residues 385–407 form a helical membrane-spanning segment; that stretch reads DTDLAIAGFGLGLVIAPLTSAAL. The Cytoplasmic portion of the chain corresponds to 408 to 415; it reads RVVPAAQH. The helical transmembrane segment at 416–440 threads the bilayer; it reads GIASAAVVVARMIGMLIGIAALSAW. Residues 441 to 487 lie on the Periplasmic side of the membrane; that stretch reads GLYRFNQYLKEQLAALPPAPADFPGGQMAGQMMRLRTATVQAYVLQY. Residues 488–507 form a helical membrane-spanning segment; the sequence is GEIFAITAGLCVFGAVLGLF. Over 508 to 535 the chain is Cytoplasmic; the sequence is IAGRREHAEESADAVDGVSNARDRAPSA.

This sequence belongs to the major facilitator superfamily. P55 (TC 2.A.1.3.34) family.

The protein resides in the cell inner membrane. In terms of biological role, in association with lipoprotein LprG transports triacylglycerides (TAG) across the inner cell membrane, probably transfering them to lipoprotein LprG in the periplasm. TAG probably regulates lipid metabolism and growth regulation and plays a structural role in the outer membrane. Mutagenesis and molecular modeling suggests TAG (and maybe other lipids) enters the central cavity of the P55 transporter from within the cell inner membrane via clefts on the cytoplasmic face of P55 between TM5-TM8 and TM2-TM11. From there the lipid is probably transferred to the hydrophobic cavity of LprG. The lprG-MHAS_02167/C731_2107 operon complements the vancomycin sensitivity of an M.smegmatis knockout of the same operon. Probably required with LprG for normal surface localization of lipoarabinomannan (LAM). In Mycolicibacterium hassiacum (strain DSM 44199 / CIP 105218 / JCM 12690 / 3849) (Mycobacterium hassiacum), this protein is Triacylglyceride transporter MHAS_02168/C731_2106.